Reading from the N-terminus, the 593-residue chain is Arginine--tRNA ligase (593 aa).

The short motif at Ala138–His148 is the 'HIGH' region element.

This sequence belongs to the class-I aminoacyl-tRNA synthetase family. In terms of assembly, monomer.

It localises to the cytoplasm. It catalyses the reaction tRNA(Arg) + L-arginine + ATP = L-arginyl-tRNA(Arg) + AMP + diphosphate. The protein is Arginine--tRNA ligase of Burkholderia ambifaria (strain ATCC BAA-244 / DSM 16087 / CCUG 44356 / LMG 19182 / AMMD) (Burkholderia cepacia (strain AMMD)).